The chain runs to 507 residues: Ribose import ATP-binding protein RbsA 2 (507 aa).

2 consecutive ABC transporter domains span residues 7 to 245 (FSLD…VGRN) and 249 to 498 (LFTR…MPQS). 39–46 (GENGAGKS) provides a ligand contact to ATP.

It belongs to the ABC transporter superfamily. Ribose importer (TC 3.A.1.2.1) family. In terms of assembly, the complex is composed of an ATP-binding protein (RbsA), two transmembrane proteins (RbsC) and a solute-binding protein (RbsB).

It localises to the cell inner membrane. The catalysed reaction is D-ribose(out) + ATP + H2O = D-ribose(in) + ADP + phosphate + H(+). In terms of biological role, part of the ABC transporter complex RbsABC involved in ribose import. Responsible for energy coupling to the transport system. The protein is Ribose import ATP-binding protein RbsA 2 of Mesorhizobium japonicum (strain LMG 29417 / CECT 9101 / MAFF 303099) (Mesorhizobium loti (strain MAFF 303099)).